Here is a 323-residue protein sequence, read N- to C-terminus: Protein REDOX 2 (323 aa).

Residue Asp-53 participates in NADP(+) binding. Catalysis depends on Tyr-58, which acts as the Proton donor. His-121 contributes to the substrate binding site. Residues 167–168, Gln-189, 215–220, and 289–297 each bind NADP(+); these read SN, WSPLLS, and DQIHEIPQR. The interval 302–323 is disordered; the sequence is GEEFMHPEGPIKSPEELWDGDL.

It belongs to the aldo/keto reductase family. Monomer. In terms of tissue distribution, expressed in leaf epidermis.

The catalysed reaction is 15alpha-stemmadenine + NADP(+) = 17-dehydrostemmadenine + NADPH + 2 H(+). It functions in the pathway alkaloid biosynthesis. In terms of biological role, component of iboga and aspidosperma monoterpenoid indole alkaloids (MIAs, e.g. tabersonine and catharanthine) biosynthesis pathway from 19E-geissoschizine. Catalyzes the second oxidation step of the unstable intermediate product resulting from the reaction triggered by the geissoschizine oxidase (GO) in the stemmadenine biosynthesis process from 19E-geissoschizine. The protein is Protein REDOX 2 of Catharanthus roseus (Madagascar periwinkle).